A 122-amino-acid chain; its full sequence is MIQMQTNLDVADNSGARRVQCIKVLGGSKRKYASVGDIIVVSVKEAIPRGRVKKGDVRKAVVVRTAKEVRREDGTAIRFDRNAAVILNNNNEPVGTRIFGPVVRELRAKNFMKIISLAPEVL.

This sequence belongs to the universal ribosomal protein uL14 family. Part of the 50S ribosomal subunit. Forms a cluster with proteins L3 and L19. In the 70S ribosome, L14 and L19 interact and together make contacts with the 16S rRNA in bridges B5 and B8.

Binds to 23S rRNA. Forms part of two intersubunit bridges in the 70S ribosome. This chain is Large ribosomal subunit protein uL14, found in Ruegeria pomeroyi (strain ATCC 700808 / DSM 15171 / DSS-3) (Silicibacter pomeroyi).